The following is a 332-amino-acid chain: MARILDNNVMGNEEFSDRTLRPQYLHEYIGQDKVKEQFAIFIEAAKRRDESLDHVLLFGPPGLGKTTMAFVIANELGVNLKQTSGPAVEKAGDLVAILNELEPGDILFIDEIHRMPMSVEEVLYSAMEDFYIDIMIGAGDTSRSIHLDLPPFTLIGATTRAGMLSNPLRARFGITGHMEYYQEKDLTEIVERTATIFEIKIDHEAARKLACRSRGTPRIANRLLKRVRDYAQIIGDGIITAQITDRALTMLDVDREGLDYIDQKILRTMIEMYQGGPVGLGTLSVNIAEERNTVEEMYEPYLIQKGFLMRTRTGRVATQKAYRHLGYPYQNT.

Residues 1-181 are large ATPase domain (RuvB-L); sequence MARILDNNVM…FGITGHMEYY (181 aa). Residues L20, R21, G62, K65, T66, T67, 128–130, R171, Y181, and R218 contribute to the ATP site; that span reads EDF. T66 provides a ligand contact to Mg(2+). The tract at residues 182–252 is small ATPAse domain (RuvB-S); that stretch reads QEKDLTEIVE…ITDRALTMLD (71 aa). A head domain (RuvB-H) region spans residues 255–332; that stretch reads REGLDYIDQK…RHLGYPYQNT (78 aa). 4 residues coordinate DNA: R291, R310, R312, and R315.

It belongs to the RuvB family. Homohexamer. Forms an RuvA(8)-RuvB(12)-Holliday junction (HJ) complex. HJ DNA is sandwiched between 2 RuvA tetramers; dsDNA enters through RuvA and exits via RuvB. An RuvB hexamer assembles on each DNA strand where it exits the tetramer. Each RuvB hexamer is contacted by two RuvA subunits (via domain III) on 2 adjacent RuvB subunits; this complex drives branch migration. In the full resolvosome a probable DNA-RuvA(4)-RuvB(12)-RuvC(2) complex forms which resolves the HJ.

Its subcellular location is the cytoplasm. It catalyses the reaction ATP + H2O = ADP + phosphate + H(+). Functionally, the RuvA-RuvB-RuvC complex processes Holliday junction (HJ) DNA during genetic recombination and DNA repair, while the RuvA-RuvB complex plays an important role in the rescue of blocked DNA replication forks via replication fork reversal (RFR). RuvA specifically binds to HJ cruciform DNA, conferring on it an open structure. The RuvB hexamer acts as an ATP-dependent pump, pulling dsDNA into and through the RuvAB complex. RuvB forms 2 homohexamers on either side of HJ DNA bound by 1 or 2 RuvA tetramers; 4 subunits per hexamer contact DNA at a time. Coordinated motions by a converter formed by DNA-disengaged RuvB subunits stimulates ATP hydrolysis and nucleotide exchange. Immobilization of the converter enables RuvB to convert the ATP-contained energy into a lever motion, pulling 2 nucleotides of DNA out of the RuvA tetramer per ATP hydrolyzed, thus driving DNA branch migration. The RuvB motors rotate together with the DNA substrate, which together with the progressing nucleotide cycle form the mechanistic basis for DNA recombination by continuous HJ branch migration. Branch migration allows RuvC to scan DNA until it finds its consensus sequence, where it cleaves and resolves cruciform DNA. The protein is Holliday junction branch migration complex subunit RuvB of Streptococcus pyogenes serotype M1.